Here is a 292-residue protein sequence, read N- to C-terminus: Phosphatidylserine decarboxylase proenzyme (292 aa).

Catalysis depends on charge relay system; for autoendoproteolytic cleavage activity residues D89, H146, and S252. The active-site Schiff-base intermediate with substrate; via pyruvic acid; for decarboxylase activity is S252. S252 carries the post-translational modification Pyruvic acid (Ser); by autocatalysis.

This sequence belongs to the phosphatidylserine decarboxylase family. PSD-B subfamily. Prokaryotic type I sub-subfamily. In terms of assembly, heterodimer of a large membrane-associated beta subunit and a small pyruvoyl-containing alpha subunit. It depends on pyruvate as a cofactor. In terms of processing, is synthesized initially as an inactive proenzyme. Formation of the active enzyme involves a self-maturation process in which the active site pyruvoyl group is generated from an internal serine residue via an autocatalytic post-translational modification. Two non-identical subunits are generated from the proenzyme in this reaction, and the pyruvate is formed at the N-terminus of the alpha chain, which is derived from the carboxyl end of the proenzyme. The autoendoproteolytic cleavage occurs by a canonical serine protease mechanism, in which the side chain hydroxyl group of the serine supplies its oxygen atom to form the C-terminus of the beta chain, while the remainder of the serine residue undergoes an oxidative deamination to produce ammonia and the pyruvoyl prosthetic group on the alpha chain. During this reaction, the Ser that is part of the protease active site of the proenzyme becomes the pyruvoyl prosthetic group, which constitutes an essential element of the active site of the mature decarboxylase.

The protein localises to the cell membrane. The catalysed reaction is a 1,2-diacyl-sn-glycero-3-phospho-L-serine + H(+) = a 1,2-diacyl-sn-glycero-3-phosphoethanolamine + CO2. It functions in the pathway phospholipid metabolism; phosphatidylethanolamine biosynthesis; phosphatidylethanolamine from CDP-diacylglycerol: step 2/2. Its function is as follows. Catalyzes the formation of phosphatidylethanolamine (PtdEtn) from phosphatidylserine (PtdSer). This Shewanella sp. (strain MR-7) protein is Phosphatidylserine decarboxylase proenzyme.